The following is a 323-amino-acid chain: Probable cell division protein WhiA (323 aa).

Residues 275–309 (TLKELGEMLTTGQVSKSGINHRLRKLDQIAERLRS) constitute a DNA-binding region (H-T-H motif).

It belongs to the WhiA family.

Involved in cell division and chromosome segregation. This chain is Probable cell division protein WhiA, found in Listeria innocua serovar 6a (strain ATCC BAA-680 / CLIP 11262).